The primary structure comprises 124 residues: Small ribosomal subunit protein uS12 (124 aa).

Residues 1–32 (MPTIQQLVRKGRQAKASKTKTPALKGSPQRRG) are disordered. Basic residues predominate over residues 9–18 (RKGRQAKASK). The residue at position 89 (Asp89) is a 3-methylthioaspartic acid.

The protein belongs to the universal ribosomal protein uS12 family. In terms of assembly, part of the 30S ribosomal subunit. Contacts proteins S8 and S17. May interact with IF1 in the 30S initiation complex.

Functionally, with S4 and S5 plays an important role in translational accuracy. In terms of biological role, interacts with and stabilizes bases of the 16S rRNA that are involved in tRNA selection in the A site and with the mRNA backbone. Located at the interface of the 30S and 50S subunits, it traverses the body of the 30S subunit contacting proteins on the other side and probably holding the rRNA structure together. The combined cluster of proteins S8, S12 and S17 appears to hold together the shoulder and platform of the 30S subunit. This chain is Small ribosomal subunit protein uS12, found in Acidothermus cellulolyticus (strain ATCC 43068 / DSM 8971 / 11B).